The primary structure comprises 330 residues: DNA repair and recombination protein RadA (330 aa).

Residue 124 to 131 (GEFGSGKT) coordinates ATP.

Belongs to the eukaryotic RecA-like protein family.

Its function is as follows. Involved in DNA repair and in homologous recombination. Binds and assemble on single-stranded DNA to form a nucleoprotein filament. Hydrolyzes ATP in a ssDNA-dependent manner and promotes DNA strand exchange between homologous DNA molecules. The polypeptide is DNA repair and recombination protein RadA (Pyrobaculum neutrophilum (strain DSM 2338 / JCM 9278 / NBRC 100436 / V24Sta) (Thermoproteus neutrophilus)).